The primary structure comprises 381 residues: 3-dehydroquinate synthase (381 aa).

NAD(+) is bound by residues 81–86, 115–119, 139–140, Lys-152, and Lys-161; these read EGESSK, GVIGD, and TS. 3 residues coordinate Zn(2+): Glu-194, His-256, and His-274.

The protein belongs to the sugar phosphate cyclases superfamily. Dehydroquinate synthase family. It depends on Co(2+) as a cofactor. The cofactor is Zn(2+). NAD(+) is required as a cofactor.

Its subcellular location is the cytoplasm. The enzyme catalyses 7-phospho-2-dehydro-3-deoxy-D-arabino-heptonate = 3-dehydroquinate + phosphate. It functions in the pathway metabolic intermediate biosynthesis; chorismate biosynthesis; chorismate from D-erythrose 4-phosphate and phosphoenolpyruvate: step 2/7. Functionally, catalyzes the conversion of 3-deoxy-D-arabino-heptulosonate 7-phosphate (DAHP) to dehydroquinate (DHQ). The sequence is that of 3-dehydroquinate synthase from Rhodopseudomonas palustris (strain ATCC BAA-98 / CGA009).